The following is a 431-amino-acid chain: F-box protein pof14 (431 aa).

Positions 172–186 (CPDEILQLIFSYCYD) constitute an F-box; atypical domain.

In terms of assembly, component of the E3 ubiquitin ligase Skp1-Cullin-1-F-box (SCF) complex. Interacts with skp1, cul1 and erg9.

Its subcellular location is the cytoplasm. The protein resides in the nucleus. The protein localises to the endoplasmic reticulum. Functionally, expression is induced during oxidative stress. Plays an essential, SCF-independent, role in the stress response to hydrogen peroxide for survival, by negatively regulating ergosterol synthesis via direct binding to the squalene synthase erg9. This is F-box protein pof14 (pof14) from Schizosaccharomyces pombe (strain 972 / ATCC 24843) (Fission yeast).